The sequence spans 85 residues: MATKKAGGSTRNGRDSEAKRLGVKRFGGESVLAGSIIVRQRGTKFHAGSNVGMGRDHTLFATADGKVKFEVKGEKSRKYVSIVTE.

Residues 1–20 (MATKKAGGSTRNGRDSEAKR) are disordered.

It belongs to the bacterial ribosomal protein bL27 family.

The polypeptide is Large ribosomal subunit protein bL27 (Actinobacillus succinogenes (strain ATCC 55618 / DSM 22257 / CCUG 43843 / 130Z)).